Here is a 132-residue protein sequence, read N- to C-terminus: Agouti-signaling protein (132 aa).

A signal peptide spans Met1–Ser22. Asn39 carries N-linked (GlcNAc...) asparagine glycosylation. Residues Lys58 to Pro88 form a disordered region. Residues Ser63–Met79 are compositionally biased toward basic and acidic residues. Cystine bridges form between Cys93–Cys108, Cys100–Cys114, Cys107–Cys125, Cys111–Cys132, and Cys116–Cys123. The Agouti domain occupies Cys93–Cys132.

It is found in the secreted. Its function is as follows. Involved in the regulation of melanogenesis. The binding of ASP to MC1R precludes alpha-MSH initiated signaling and thus blocks production of cAMP, leading to a down-regulation of eumelanogenesis (brown/black pigment) and thus increasing synthesis of pheomelanin (yellow/red pigment). This Cercopithecus mitis (Blue monkey) protein is Agouti-signaling protein (ASIP).